The primary structure comprises 1056 residues: Ribosomal protein S6 kinase delta-1 (1056 aa).

The PX domain occupies 8 to 132 (SADLARFYTV…DFFKGGVISD (125 aa)). Residues 204-223 (VGAVASDSEPSRVEDRESRS) are disordered. Basic and acidic residues predominate over residues 212–222 (EPSRVEDRESR). Residues 276 to 304 (VQGESSPTRREAVKRRTAEYLMRAESICS) enclose the MIT domain. Phosphoserine occurs at positions 281, 422, 423, 426, 446, 448, and 454. In terms of domain architecture, Protein kinase 1 spans 343 to 444 (GVIDKVLLVM…SMPPRVCLQQ (102 aa)). A disordered region spans residues 426–504 (SLDIKEGRPS…KWLDSGSSSE (79 aa)). Residues 443–454 (QQPSASPQGGSS) are compositionally biased toward low complexity. The segment covering 473 to 482 (TSLTPSSQDD) has biased composition (polar residues). Phosphoserine occurs at positions 493 and 527. Residues 529–588 (SEESVMQPEGDKADTQAVSSPASLATGSVSPSTHLRVFSGGEDLEAVSSPPTSESLSRSK) are disordered. A compositionally biased stretch (polar residues) spans 544–561 (QAVSSPASLATGSVSPST). A compositionally biased stretch (low complexity) spans 576-587 (SSPPTSESLSRS). S577, S599, S602, S634, S655, S658, S661, and S787 each carry phosphoserine. Positions 628 to 662 (TLEDGDSPSQSLDPGESKRESEAQDSVSRGSDDSV) are disordered. Residues 789–1046 (RSESDRLGQV…VEDIKSHPFF (258 aa)) enclose the Protein kinase 2 domain. ATP-binding positions include 795 to 803 (LGQVEVVVT) and K823. D919 acts as the Proton acceptor in catalysis.

This sequence belongs to the protein kinase superfamily. Ser/Thr protein kinase family. S6 kinase subfamily. Interacts with SPHK1 and phosphatidylinositol 3-phosphate. Interacts (via PX domain) with PRDX3.

It is found in the cytoplasm. Its subcellular location is the membrane. It localises to the early endosome. The enzyme catalyses L-seryl-[protein] + ATP = O-phospho-L-seryl-[protein] + ADP + H(+). It catalyses the reaction L-threonyl-[protein] + ATP = O-phospho-L-threonyl-[protein] + ADP + H(+). Functionally, may be involved in transmitting sphingosine-1 phosphate (SPP)-mediated signaling into the cell. Plays a role in the recruitment of PRDX3 to early endosomes. The polypeptide is Ribosomal protein S6 kinase delta-1 (Rps6kc1) (Mus musculus (Mouse)).